The primary structure comprises 141 residues: Nucleoside diphosphate kinase (141 aa).

Residues lysine 10, phenylalanine 58, arginine 86, threonine 92, arginine 103, and asparagine 113 each contribute to the ATP site. The active-site Pros-phosphohistidine intermediate is histidine 116.

It belongs to the NDK family. In terms of assembly, homotetramer. The cofactor is Mg(2+).

The protein resides in the cytoplasm. It catalyses the reaction a 2'-deoxyribonucleoside 5'-diphosphate + ATP = a 2'-deoxyribonucleoside 5'-triphosphate + ADP. The catalysed reaction is a ribonucleoside 5'-diphosphate + ATP = a ribonucleoside 5'-triphosphate + ADP. Its function is as follows. Major role in the synthesis of nucleoside triphosphates other than ATP. The ATP gamma phosphate is transferred to the NDP beta phosphate via a ping-pong mechanism, using a phosphorylated active-site intermediate. The sequence is that of Nucleoside diphosphate kinase from Hydrogenovibrio crunogenus (strain DSM 25203 / XCL-2) (Thiomicrospira crunogena).